We begin with the raw amino-acid sequence, 485 residues long: GTPase Obg (485 aa).

The region spanning 2-159 (SKFIDRVVLH…RDLVLELKSV (158 aa)) is the Obg domain. A disordered region spans residues 64–84 (PHAKAGNGKPGEGGNRDGKMG). In terms of domain architecture, OBG-type G spans 160–340 (ADVGLVGFPS…LTFALADLVR (181 aa)). GTP-binding positions include 166-173 (GFPSAGKS), 191-195 (FTTLV), 212-215 (DVPG), 292-295 (NKTD), and 321-323 (SAV). Mg(2+) is bound by residues serine 173 and threonine 193. The OCT domain occupies 358–438 (PIAVDESGFT…IGDVTFDWEP (81 aa)). Residues 457-469 (LEQSDRVSAAERK) are compositionally biased toward basic and acidic residues. The disordered stretch occupies residues 457–485 (LEQSDRVSAAERKHASRVRRGLVEDDEQR).

This sequence belongs to the TRAFAC class OBG-HflX-like GTPase superfamily. OBG GTPase family. As to quaternary structure, monomer. Requires Mg(2+) as cofactor.

The protein localises to the cytoplasm. Its function is as follows. An essential GTPase which binds GTP, GDP and possibly (p)ppGpp with moderate affinity, with high nucleotide exchange rates and a fairly low GTP hydrolysis rate. Plays a role in control of the cell cycle, stress response, ribosome biogenesis and in those bacteria that undergo differentiation, in morphogenesis control. This chain is GTPase Obg, found in Nocardia farcinica (strain IFM 10152).